A 117-amino-acid polypeptide reads, in one-letter code: Hainantoxin-XV (117 aa).

Positions 1–20 are cleaved as a signal peptide; that stretch reads MKLCAVIIASLLVCVAVASS. Residues 20–55 are disordered; the sequence is SSDNQKEFAQEKEMTREETQSLGEHEKDDEVTGSEE. The propeptide occupies 21-56; the sequence is SDNQKEFAQEKEMTREETQSLGEHEKDDEVTGSEER. The segment covering 23-55 has biased composition (basic and acidic residues); that stretch reads NQKEFAQEKEMTREETQSLGEHEKDDEVTGSEE. 4 disulfide bridges follow: Cys-58/Cys-72, Cys-65/Cys-78, Cys-69/Cys-115, and Cys-71/Cys-91.

The protein belongs to the neurotoxin 03 (Tx2) family. 02 subfamily. HNTX-XV sub-subfamily. In terms of tissue distribution, expressed by the venom gland.

The protein localises to the secreted. Functionally, putative ion channel inhibitor. The sequence is that of Hainantoxin-XV from Cyriopagopus hainanus (Chinese bird spider).